We begin with the raw amino-acid sequence, 267 residues long: L-aspartate dehydrogenase (267 aa).

NAD(+) contacts are provided by Ala124 and Asn190. His218 is an active-site residue.

This sequence belongs to the L-aspartate dehydrogenase family.

It carries out the reaction L-aspartate + NADP(+) + H2O = oxaloacetate + NH4(+) + NADPH + H(+). The catalysed reaction is L-aspartate + NAD(+) + H2O = oxaloacetate + NH4(+) + NADH + H(+). The protein operates within cofactor biosynthesis; NAD(+) biosynthesis; iminoaspartate from L-aspartate (dehydrogenase route): step 1/1. Specifically catalyzes the NAD or NADP-dependent dehydrogenation of L-aspartate to iminoaspartate. This is L-aspartate dehydrogenase from Methanococcus maripaludis (strain DSM 14266 / JCM 13030 / NBRC 101832 / S2 / LL).